The sequence spans 521 residues: GMP synthase [glutamine-hydrolyzing] (521 aa).

Residues 8–203 (KILILDFGAQ…VVDVCGCQTL (196 aa)) enclose the Glutamine amidotransferase type-1 domain. Cysteine 85 acts as the Nucleophile in catalysis. Residues histidine 177 and glutamate 179 contribute to the active site. Positions 204–396 (WTAANIIEDQ…LGLPRTMVYR (193 aa)) constitute a GMPS ATP-PPase domain. Residue 231 to 237 (SGGVDSS) participates in ATP binding.

Homodimer.

It carries out the reaction XMP + L-glutamine + ATP + H2O = GMP + L-glutamate + AMP + diphosphate + 2 H(+). Its pathway is purine metabolism; GMP biosynthesis; GMP from XMP (L-Gln route): step 1/1. Functionally, catalyzes the synthesis of GMP from XMP. The polypeptide is GMP synthase [glutamine-hydrolyzing] (Xanthomonas axonopodis pv. citri (strain 306)).